The chain runs to 200 residues: Holliday junction branch migration complex subunit RuvA (200 aa).

A domain I region spans residues 1–63; the sequence is MYAYIKGTLS…EDAQLLYGFI (63 aa). Residues 64-142 are domain II; that stretch reads NEEEKEMFLS…ITEENSDDLL (79 aa). Residues 143–149 form a flexible linker region; the sequence is QTQVNGN. The segment at 150-200 is domain III; it reads EQNQIISEALLALQALGYSKRELTKVEKSLNKHNVNSVDEAVKIGLQTLVS.

The protein belongs to the RuvA family. Homotetramer. Forms an RuvA(8)-RuvB(12)-Holliday junction (HJ) complex. HJ DNA is sandwiched between 2 RuvA tetramers; dsDNA enters through RuvA and exits via RuvB. An RuvB hexamer assembles on each DNA strand where it exits the tetramer. Each RuvB hexamer is contacted by two RuvA subunits (via domain III) on 2 adjacent RuvB subunits; this complex drives branch migration. In the full resolvosome a probable DNA-RuvA(4)-RuvB(12)-RuvC(2) complex forms which resolves the HJ.

It is found in the cytoplasm. Its function is as follows. The RuvA-RuvB-RuvC complex processes Holliday junction (HJ) DNA during genetic recombination and DNA repair, while the RuvA-RuvB complex plays an important role in the rescue of blocked DNA replication forks via replication fork reversal (RFR). RuvA specifically binds to HJ cruciform DNA, conferring on it an open structure. The RuvB hexamer acts as an ATP-dependent pump, pulling dsDNA into and through the RuvAB complex. HJ branch migration allows RuvC to scan DNA until it finds its consensus sequence, where it cleaves and resolves the cruciform DNA. This Staphylococcus epidermidis (strain ATCC 35984 / DSM 28319 / BCRC 17069 / CCUG 31568 / BM 3577 / RP62A) protein is Holliday junction branch migration complex subunit RuvA.